Consider the following 193-residue polypeptide: Transcriptional regulator RamR (193 aa).

An HTH tetR-type domain is found at 7 to 66 (EDKKQALLEAATQAIAQSGIAASTAVIARNAGVAEGTLFRYFATKDELINTLYLHLKQDL). The H-T-H motif DNA-binding region spans 29–48 (STAVIARNAGVAEGTLFRYF).

In terms of assembly, homodimer. May bind DNA either as a homodimer or as a pair of homodimers. Various chemicals reduce DNA-binding in vitro, including bile acids, such as cholic and chenodeoxycholic acids, and antimicrobial drugs, such as berberine, crystal violet, dequalinium, ethidium bromide and rhodamine 6G. Binds small regulatory RNA StyR3.

In terms of biological role, transcriptional regulator. Represses the transcription of the transcriptional activator RamA and, thereby, leads to repression of the expression of the efflux pump subunits AcrA and AcrB, and TolC. Acts by binding directly to the promoter region of the ramA gene. Promoter binding may be inhibited partially by the small regulatory RNA StyR3, perhaps thereby ensuring a basal level of expression of RamA. The protein is Transcriptional regulator RamR of Salmonella typhimurium (strain LT2 / SGSC1412 / ATCC 700720).